Here is a 242-residue protein sequence, read N- to C-terminus: DNA repair protein RecO (242 aa).

Belongs to the RecO family.

Functionally, involved in DNA repair and RecF pathway recombination. This is DNA repair protein RecO from Methylococcus capsulatus (strain ATCC 33009 / NCIMB 11132 / Bath).